We begin with the raw amino-acid sequence, 500 residues long: Na(+)/H(+) antiporter NhaB (500 aa).

Helical transmembrane passes span 34–54, 62–82, 90–110, 129–149, 150–170, 205–225, 241–261, 311–331, 350–370, 394–414, 449–469, and 477–497; these read PLFF…EFIF, CYPL…GMTT, LVHN…IYFM, ALLG…LDAL, TVTA…HRVA, LLMH…VGEP, FFSK…VTCV, ILIV…LLVI, FKDA…VAVI, MLFI…VATI, VATP…IAPL, and MVWM…YAVS.

Belongs to the NhaB Na(+)/H(+) (TC 2.A.34) antiporter family.

It is found in the cell inner membrane. The catalysed reaction is 2 Na(+)(in) + 3 H(+)(out) = 2 Na(+)(out) + 3 H(+)(in). Na(+)/H(+) antiporter that extrudes sodium in exchange for external protons. This Pseudomonas fluorescens (strain ATCC BAA-477 / NRRL B-23932 / Pf-5) protein is Na(+)/H(+) antiporter NhaB.